Reading from the N-terminus, the 235-residue chain is Phosphoribosylaminoimidazole-succinocarboxamide synthase (235 aa).

This sequence belongs to the SAICAR synthetase family.

It catalyses the reaction 5-amino-1-(5-phospho-D-ribosyl)imidazole-4-carboxylate + L-aspartate + ATP = (2S)-2-[5-amino-1-(5-phospho-beta-D-ribosyl)imidazole-4-carboxamido]succinate + ADP + phosphate + 2 H(+). It participates in purine metabolism; IMP biosynthesis via de novo pathway; 5-amino-1-(5-phospho-D-ribosyl)imidazole-4-carboxamide from 5-amino-1-(5-phospho-D-ribosyl)imidazole-4-carboxylate: step 1/2. This Streptococcus pneumoniae (strain ATCC 700669 / Spain 23F-1) protein is Phosphoribosylaminoimidazole-succinocarboxamide synthase.